The primary structure comprises 914 residues: TRPM8 channel-associated factor 3 (914 aa).

Positions 533-832 (NSWVSTGLYL…TYLQLQEGFG (300 aa)) constitute a Peptidase M60 domain.

The protein belongs to the TCAF family.

Its function is as follows. May play a role in the regulation of the cation channel TRPM8 activity. The protein is TRPM8 channel-associated factor 3 of Rattus norvegicus (Rat).